Here is a 306-residue protein sequence, read N- to C-terminus: Phospho-N-acetylmuramoyl-pentapeptide-transferase (306 aa).

Helical transmembrane passes span 1–21 (MDIYSAATLLAEFVLGIIIFP), 49–69 (GTPTAGGIVFISLTVIAGLIL), 75–95 (LIFTLLFYGFIGFLDDFVSIV), 104–124 (AWQKLALQFLFSIWIAYTILQ), 130–150 (IFGITVPSWLFYLFTMLLVSG), 160–180 (GIDGLAGWVFVTSMIPFMFFS), 182–202 (SSMEYKAIFVIIMPLLSFLVY), 209–229 (VFMGDTGSLALGAYISTYALM), 234–254 (LSLLFFTPIFLLETISVILQV), and 284–304 (IVGVFSAWNLAIAIFYIAFFL).

This sequence belongs to the glycosyltransferase 4 family. MraY subfamily. It depends on Mg(2+) as a cofactor.

It localises to the cell inner membrane. It carries out the reaction UDP-N-acetyl-alpha-D-muramoyl-L-alanyl-gamma-D-glutamyl-meso-2,6-diaminopimeloyl-D-alanyl-D-alanine + di-trans,octa-cis-undecaprenyl phosphate = di-trans,octa-cis-undecaprenyl diphospho-N-acetyl-alpha-D-muramoyl-L-alanyl-D-glutamyl-meso-2,6-diaminopimeloyl-D-alanyl-D-alanine + UMP. It functions in the pathway cell wall biogenesis; peptidoglycan biosynthesis. Its function is as follows. Catalyzes the initial step of the lipid cycle reactions in the biosynthesis of the cell wall peptidoglycan: transfers peptidoglycan precursor phospho-MurNAc-pentapeptide from UDP-MurNAc-pentapeptide onto the lipid carrier undecaprenyl phosphate, yielding undecaprenyl-pyrophosphoryl-MurNAc-pentapeptide, known as lipid I. The protein is Phospho-N-acetylmuramoyl-pentapeptide-transferase of Fervidobacterium nodosum (strain ATCC 35602 / DSM 5306 / Rt17-B1).